The chain runs to 617 residues: Probable endochitinase (617 aa).

The GH18 domain maps to 53–426 (YIRPCYFTNW…SVIAKELGGV (374 aa)). C57 and C82 are disulfide-bonded. Residues 109-110 (DW) and 136-139 (GGWS) each bind chitin. Residue E179 is the Proton donor of the active site. Residues Y180 and 245-248 (MSYD) each bind chitin. N-linked (GlcNAc...) asparagine glycosylation is present at N310. W394 contacts chitin. Chitin-binding type-2 domains lie at 478-534 (TNVC…GCSV) and 563-617 (AFKC…KCAK). Intrachain disulfides connect C511–C524 and C594–C607.

It belongs to the glycosyl hydrolase 18 family. Chitinase class II subfamily.

It carries out the reaction Random endo-hydrolysis of N-acetyl-beta-D-glucosaminide (1-&gt;4)-beta-linkages in chitin and chitodextrins.. The protein is Probable endochitinase (cht-1) of Caenorhabditis elegans.